The sequence spans 79 residues: Small ribosomal subunit protein bS16c (79 aa).

Belongs to the bacterial ribosomal protein bS16 family.

Its subcellular location is the plastid. It is found in the chloroplast. This chain is Small ribosomal subunit protein bS16c, found in Staurastrum punctulatum (Green alga).